Consider the following 688-residue polypeptide: UvrABC system protein B (688 aa).

Residues 31–188 (GRVNAGEPDV…RKFVSMQYQR (158 aa)) form the Helicase ATP-binding domain. ATP is bound at residue 44 to 51 (GATGTGKS). A Beta-hairpin motif is present at residues 97–120 (YYDYYQPEAYVPQTDTFIEKDSSV). A Helicase C-terminal domain is found at 434–587 (QIDDLLEQIR…QVAYNTEHGI (154 aa)). A disordered region spans residues 607-632 (GEDTKKMLEGRGGGKRSPTPNLRREG). The region spanning 642-677 (ETIISDLNDQMLQAAGELKFELAARLRDELGDLKRE) is the UVR domain.

The protein belongs to the UvrB family. In terms of assembly, forms a heterotetramer with UvrA during the search for lesions. Interacts with UvrC in an incision complex.

The protein resides in the cytoplasm. Its function is as follows. The UvrABC repair system catalyzes the recognition and processing of DNA lesions. A damage recognition complex composed of 2 UvrA and 2 UvrB subunits scans DNA for abnormalities. Upon binding of the UvrA(2)B(2) complex to a putative damaged site, the DNA wraps around one UvrB monomer. DNA wrap is dependent on ATP binding by UvrB and probably causes local melting of the DNA helix, facilitating insertion of UvrB beta-hairpin between the DNA strands. Then UvrB probes one DNA strand for the presence of a lesion. If a lesion is found the UvrA subunits dissociate and the UvrB-DNA preincision complex is formed. This complex is subsequently bound by UvrC and the second UvrB is released. If no lesion is found, the DNA wraps around the other UvrB subunit that will check the other stand for damage. This Clavibacter sepedonicus (Clavibacter michiganensis subsp. sepedonicus) protein is UvrABC system protein B.